A 789-amino-acid polypeptide reads, in one-letter code: Protein FLOWERING LOCUS D (789 aa).

The tract at residues 1–23 (MVSFSAPKKRRRGRSQRSMSSLN) is disordered. Residues 76-177 (NKEATTEALL…FGIAQAIKDK (102 aa)) enclose the SWIRM domain. FAD is bound by residues Ser195, Glu214, Arg216, Arg222, and 240-243 (GGSV). Lys287 participates in a covalent cross-link: Glycyl lysine isopeptide (Lys-Gly) (interchain with G-Cter in SUMO). Residues Glu595, 604-605 (TM), and 607-612 (GAFVTG) each bind FAD. Glycyl lysine isopeptide (Lys-Gly) (interchain with G-Cter in SUMO) cross-links involve residues Lys693 and Lys770.

It belongs to the flavin monoamine oxidase family. Interacts with HDA6. FAD serves as cofactor. In terms of processing, sumoylated at Lys-287, Lys-693 and Lys-770 by SIZ1. Sumoylation alters its activity and the histone H4 acetylation status of FLC locus, promoting FLC expression.

Its function is as follows. Probable histone demethylase that promotes flowering independently of the photoperiod and vernalization pathways by repressing FLOWERING LOCUS C (FLC), a floral repressor that blocks the transition from vegetative to reproductive development. Probably mediates histone H3 'Lys-4' demethylation at FLC locus. Seems to act in partial redundancy with LDL1 and LDL2 to repress FLC expression. Required for histone H4 deacetylation of FLC locus. May be a component of the histone deacetylase complex. Forms a histone deacetylase complex with HDA5, HDA6 and MSI4/FVE that represses FLC gene expression to control flowering time. Required for systemic acquired resistance (SAR) toward pathogenic bacteria (e.g. Pseudomonas syringae pv tomato DC3000 (avrPto)). Together with FLD and MSI4/FVE, contributes to dehydroabietinal-dependent (DA, a diterpenoid tricyclic diterpene) activation of flowering ans SAR. The polypeptide is Protein FLOWERING LOCUS D (Arabidopsis thaliana (Mouse-ear cress)).